The primary structure comprises 942 residues: Protein translocase subunit SecA (942 aa).

Residues Q90, 108–112 (GEGKT), and D509 contribute to the ATP site.

The protein belongs to the SecA family. Monomer and homodimer. Part of the essential Sec protein translocation apparatus which comprises SecA, SecYEG and auxiliary proteins SecDF. Other proteins may also be involved.

The protein resides in the cell inner membrane. Its subcellular location is the cellular thylakoid membrane. It is found in the cytoplasm. It catalyses the reaction ATP + H2O + cellular proteinSide 1 = ADP + phosphate + cellular proteinSide 2.. Part of the Sec protein translocase complex. Interacts with the SecYEG preprotein conducting channel. Has a central role in coupling the hydrolysis of ATP to the transfer of proteins into and across the cell membrane, serving as an ATP-driven molecular motor driving the stepwise translocation of polypeptide chains across the membrane. Its function is as follows. Probably participates in protein translocation into and across both the cytoplasmic and thylakoid membranes in cyanobacterial cells. This is Protein translocase subunit SecA from Prochlorococcus marinus (strain NATL2A).